Here is a 100-residue protein sequence, read N- to C-terminus: Osteocalcin (100 aa).

The first 23 residues, 1–23, serve as a signal peptide directing secretion; the sequence is MRALTLLALLALAALCITGQAGA. Residues 24-51 constitute a propeptide that is removed on maturation; that stretch reads KPSGADSSKGAAFVSKQEGSEVVKRPRR. Positions 52–98 constitute a Gla domain; the sequence is YLYQWLGAPVPYPDPLEPKREVCELNPDCDELADHIGFQEAYRRFYG. Residues Glu68, Glu72, Glu75, and Asp81 each coordinate Ca(2+). A 4-carboxyglutamate mark is found at Glu68, Glu72, and Glu75. Residues Cys74 and Cys80 are joined by a disulfide bond.

It belongs to the osteocalcin/matrix Gla protein family. Post-translationally, gamma-carboxyglutamate residues are formed by vitamin K dependent carboxylation by GGCX. These residues are essential for the binding of calcium. Decarboxylation promotes the hormone activity.

It is found in the secreted. Functionally, the carboxylated form is one of the main organic components of the bone matrix, which constitutes 1-2% of the total bone protein: it acts as a negative regulator of bone formation and is required to limit bone formation without impairing bone resorption or mineralization. The carboxylated form binds strongly to apatite and calcium. The uncarboxylated form acts as a hormone secreted by osteoblasts, which regulates different cellular processes, such as energy metabolism, male fertility and brain development. Regulates of energy metabolism by acting as a hormone favoring pancreatic beta-cell proliferation, insulin secretion and sensitivity and energy expenditure. Uncarboxylated osteocalcin hormone also promotes testosterone production in the testes: acts as a ligand for G protein-coupled receptor GPRC6A at the surface of Leydig cells, initiating a signaling response that promotes the expression of enzymes required for testosterone synthesis in a CREB-dependent manner. Also acts as a regulator of brain development: osteocalcin hormone crosses the blood-brain barrier and acts as a ligand for GPR158 on neurons, initiating a signaling response that prevents neuronal apoptosis in the hippocampus, favors the synthesis of all monoamine neurotransmitters and inhibits that of gamma-aminobutyric acid (GABA). Osteocalcin also crosses the placenta during pregnancy and maternal osteocalcin is required for fetal brain development. The protein is Osteocalcin of Pongo pygmaeus (Bornean orangutan).